The chain runs to 267 residues: 3-oxoadipate enol-lactonase 2 (267 aa).

It catalyses the reaction (4,5-dihydro-5-oxofuran-2-yl)-acetate + H2O = 3-oxoadipate + H(+). Its pathway is aromatic compound metabolism; beta-ketoadipate pathway; 3-oxoadipate from 5-oxo-4,5-dihydro-2-furylacetate: step 1/1. This Acinetobacter baylyi (strain ATCC 33305 / BD413 / ADP1) protein is 3-oxoadipate enol-lactonase 2 (catD).